Consider the following 303-residue polypeptide: Phytochrome-associated serine/threonine-protein phosphatase 3 (303 aa).

Zn(2+) is bound by residues D50, H52, D78, and N110. Residue H111 is the Proton donor of the active site. Positions 160 and 234 each coordinate Zn(2+).

This sequence belongs to the PPP phosphatase family. PP-6 (PP-V) subfamily. As to quaternary structure, interacts with PHYA and PHYB, mostly when they are phosphorylated and in Pfr forms. Interacts with TAP46. Interacts with NRP. Interacts with PIN1 and PIN2. Interacts with ABI5. Interacts with PIF3 and PIF4. Protein phosphatase 6 (PP6) holoenzyme is a heterotrimeric complex formed by the catalytic subunit FYPP, a SAPS domain-containing subunit (SAL) and a protein phosphatase 2A regulatory subunit A (PP2AA). Zn(2+) serves as cofactor. As to expression, mostly expressed in flowers. Also detected to a lower extent in stems and leaves. Expressed in roots.

Its subcellular location is the cytoplasm. It carries out the reaction O-phospho-L-seryl-[protein] + H2O = L-seryl-[protein] + phosphate. The enzyme catalyses O-phospho-L-threonyl-[protein] + H2O = L-threonyl-[protein] + phosphate. Catalytic subunit of protein phosphatase 6 (PP6). Dephosphorylates phosphorylated phytochromes, with a preference toward Pfr forms. Plays a major role in the photoperiodic control of flowering time in long days by modulating phytochrome signals in flowering time control. Involved in the regulation of polar auxin transport in roots. Dephosphorylates directly the auxin efflux carriers PIN1 and PIN2, thus promoting their proper polar localization in root cell plasma membrane. Acts antagonistically with the protein kinase PID to regulate the reversible phosphorylation of PIN and polar targeting, subsequently impacting polar auxin transport and plant development. Involved in the regulation of abscisic acid (ABA) signaling during seed germination and postgermination seedling growth. Functions as a negative regulator of ABA signaling through direct dephosphorylation and destabilization of ABI5 protein. Acts antagonistically with the protein kinase SRK2E/SNRK2.6 to regulate ABI5 phosphorylation and ABA responses. Involved in the regulation of phosphorylation status in hypocotyl phototropism. Involved in the negative regulation of photomorphogenesis by controlling the stability and transcriptional activity of PIF3 and PIF4 proteins in the dark, via the regulation of their phosphorylation status. This is Phytochrome-associated serine/threonine-protein phosphatase 3 from Arabidopsis thaliana (Mouse-ear cress).